Consider the following 519-residue polypeptide: F-box-like/WD repeat-containing protein TBL1XR1-A (519 aa).

A LisH domain is found at 4–36 (SSDEVNFLVYRYLQESGFSHSAFTFGIESHISQ). One can recognise an F-box-like domain in the interval 41–86 (GALAPPAALISIIQKGLQYVEAEVSINEDGTLFDGRPIESLSLIDA). A compositionally biased stretch (low complexity) spans 115-139 (AAAAAATPNNQQPPAKNGENTANGE). The interval 115-147 (AAAAAATPNNQQPPAKNGENTANGEENGGHALA) is disordered. WD repeat units lie at residues 172 to 211 (GHES…TSGS), 228 to 267 (PSNK…ASTL), 269 to 308 (QHKG…AKQQ), 311 to 349 (FHSA…PIKT), 352 to 391 (GHTN…CVHD), 394 to 442 (AHNK…CIHT), 445 to 484 (KHQE…LVHS), and 486 to 519 (RGTG…DLRK).

The protein belongs to the WD repeat EBI family. Interacts with heterodimers of rxra and thrb, and this interaction is abrogated by thyroid hormone binding to thrb. Interacts with ncor1.

The protein resides in the nucleus. Its function is as follows. F-box-like protein which acts as an integral component of the N-CoR transcriptional corepressor complex. Probably regulates transcription activation mediated by nuclear receptors. May mediate the recruitment of the 19S proteasome complex, leading to the subsequent proteasomal degradation of the N-CoR complex, thereby allowing cofactor exchange and transcription activation. The sequence is that of F-box-like/WD repeat-containing protein TBL1XR1-A (tbl1xr1-a) from Xenopus laevis (African clawed frog).